The following is a 24-amino-acid chain: Superoxide dismutase [Cu-Zn] (24 aa).

Belongs to the Cu-Zn superoxide dismutase family. In terms of assembly, homodimer. Cu cation serves as cofactor. It depends on Zn(2+) as a cofactor.

The protein resides in the cytoplasm. It carries out the reaction 2 superoxide + 2 H(+) = H2O2 + O2. In terms of biological role, destroys radicals which are normally produced within the cells and which are toxic to biological systems. The protein is Superoxide dismutase [Cu-Zn] (sod1) of Aquarana catesbeiana (American bullfrog).